The sequence spans 229 residues: Cytochrome c oxidase assembly factor 7 (229 aa).

5 Sel1-like repeats span residues 34–66 (PEGC…EVNA), 68–104 (AQSC…NTQG), 108–145 (VDAC…EGGF), 146–182 (APSC…DLGH), and 183–218 (VWGC…DLHG). The tract at residues 197 to 229 (DGTDKDEQRAEELKNRAKDLHGQEKERQLKFGE) is disordered.

This sequence belongs to the hcp beta-lactamase family.

Its subcellular location is the mitochondrion intermembrane space. Functionally, may be required for assembly of mitochondrial respiratory chain complexes. This is Cytochrome c oxidase assembly factor 7 (coa7) from Danio rerio (Zebrafish).